Here is a 284-residue protein sequence, read N- to C-terminus: Bifunctional protein FolD (284 aa).

NADP(+) contacts are provided by residues 166–168 (GAS) and Ile232.

This sequence belongs to the tetrahydrofolate dehydrogenase/cyclohydrolase family. Homodimer.

It catalyses the reaction (6R)-5,10-methylene-5,6,7,8-tetrahydrofolate + NADP(+) = (6R)-5,10-methenyltetrahydrofolate + NADPH. The enzyme catalyses (6R)-5,10-methenyltetrahydrofolate + H2O = (6R)-10-formyltetrahydrofolate + H(+). It participates in one-carbon metabolism; tetrahydrofolate interconversion. Functionally, catalyzes the oxidation of 5,10-methylenetetrahydrofolate to 5,10-methenyltetrahydrofolate and then the hydrolysis of 5,10-methenyltetrahydrofolate to 10-formyltetrahydrofolate. The protein is Bifunctional protein FolD of Shewanella sediminis (strain HAW-EB3).